The chain runs to 643 residues: Phosphomethylpyrimidine synthase (643 aa).

Substrate is bound by residues asparagine 248, methionine 277, tyrosine 306, histidine 342, 362–364 (SRG), 403–406 (DGLR), and glutamate 442. Histidine 446 is a Zn(2+) binding site. Tyrosine 469 is a substrate binding site. Histidine 510 is a binding site for Zn(2+). Positions 590, 593, and 598 each coordinate [4Fe-4S] cluster.

The protein belongs to the ThiC family. As to quaternary structure, homodimer. It depends on [4Fe-4S] cluster as a cofactor.

It catalyses the reaction 5-amino-1-(5-phospho-beta-D-ribosyl)imidazole + S-adenosyl-L-methionine = 4-amino-2-methyl-5-(phosphooxymethyl)pyrimidine + CO + 5'-deoxyadenosine + formate + L-methionine + 3 H(+). It participates in cofactor biosynthesis; thiamine diphosphate biosynthesis. In terms of biological role, catalyzes the synthesis of the hydroxymethylpyrimidine phosphate (HMP-P) moiety of thiamine from aminoimidazole ribotide (AIR) in a radical S-adenosyl-L-methionine (SAM)-dependent reaction. The protein is Phosphomethylpyrimidine synthase of Burkholderia ambifaria (strain ATCC BAA-244 / DSM 16087 / CCUG 44356 / LMG 19182 / AMMD) (Burkholderia cepacia (strain AMMD)).